A 273-amino-acid polypeptide reads, in one-letter code: 3-methyl-2-oxobutanoate hydroxymethyltransferase (273 aa).

The Mg(2+) site is built by Asp53 and Asp92. 3-methyl-2-oxobutanoate-binding positions include 53-54 (DS), Asp92, and Lys122. Glu124 provides a ligand contact to Mg(2+). The Proton acceptor role is filled by Glu191.

Belongs to the PanB family. Homodecamer; pentamer of dimers. Mg(2+) serves as cofactor.

Its subcellular location is the cytoplasm. The enzyme catalyses 3-methyl-2-oxobutanoate + (6R)-5,10-methylene-5,6,7,8-tetrahydrofolate + H2O = 2-dehydropantoate + (6S)-5,6,7,8-tetrahydrofolate. It participates in cofactor biosynthesis; (R)-pantothenate biosynthesis; (R)-pantoate from 3-methyl-2-oxobutanoate: step 1/2. Its function is as follows. Catalyzes the reversible reaction in which hydroxymethyl group from 5,10-methylenetetrahydrofolate is transferred onto alpha-ketoisovalerate to form ketopantoate. The polypeptide is 3-methyl-2-oxobutanoate hydroxymethyltransferase (Porphyromonas gingivalis (strain ATCC 33277 / DSM 20709 / CIP 103683 / JCM 12257 / NCTC 11834 / 2561)).